A 297-amino-acid chain; its full sequence is Nuclear transcription factor Y subunit B-11 (297 aa).

Residues 1 to 25 (MKSRKSYGHLLSPVGSPPLDNESGE) form a disordered region. Residues 63 to 69 (LPIANVS) mediate DNA binding. The subunit association domain (SAD) stretch occupies residues 90–101 (VQECVSEFISFV).

Belongs to the NFYB/HAP3 subunit family. In terms of assembly, heterotrimeric transcription factor composed of three components, NF-YA, NF-YB and NF-YC. NF-YB and NF-YC must interact and dimerize for NF-YA association and DNA binding. Interacts with NFYC2, NFYC4 and NFYC6. As to expression, expressed in roots, culms, nodes, leaf blades, leaf sheaths and young panicles.

It localises to the nucleus. Its subcellular location is the cytoplasm. Functionally, probable transcription factor involved in the regulation of flowering time under long day (LD) conditions. Functions as a repressor of flowering, independently of HD1 and GHD7. Controls flowering time by negatively regulating the expression of EHD1 and HD3A. Regulates plant height by promoting cell elongation in the internodes. Component of the NF-Y/HAP transcription factor complex. This Oryza sativa subsp. japonica (Rice) protein is Nuclear transcription factor Y subunit B-11 (HD5).